A 208-amino-acid polypeptide reads, in one-letter code: Inosine triphosphate pyrophosphatase (208 aa).

At Ala2 the chain carries N-acetylalanine. 14–19 serves as a coordination point for ITP; that stretch reads TGNAKK. Glu44 lines the Mg(2+) pocket. Residues Lys56, 72 to 73, Lys89, 149 to 152, Lys172, and 177 to 178 contribute to the ITP site; these read DT, FGWD, and HR.

This sequence belongs to the HAM1 NTPase family. In terms of assembly, homodimer. Requires Mg(2+) as cofactor. Mn(2+) serves as cofactor.

The protein localises to the cytoplasm. It carries out the reaction ITP + H2O = IMP + diphosphate + H(+). The enzyme catalyses dITP + H2O = dIMP + diphosphate + H(+). The catalysed reaction is XTP + H2O = XMP + diphosphate + H(+). It catalyses the reaction N(6)-hydroxy-dATP + H2O = N(6)-hydroxy-dAMP + diphosphate + H(+). In terms of biological role, pyrophosphatase that hydrolyzes the non-canonical purine nucleotides inosine triphosphate (ITP), deoxyinosine triphosphate (dITP) as well as 2'-deoxy-N-6-hydroxylaminopurine triphosphate (dHAPTP) and xanthosine 5'-triphosphate (XTP) to their respective monophosphate derivatives. The enzyme does not distinguish between the deoxy- and ribose forms. Probably excludes non-canonical purines from RNA and DNA precursor pools, thus preventing their incorporation into RNA and DNA and avoiding chromosomal lesions. In Bos taurus (Bovine), this protein is Inosine triphosphate pyrophosphatase.